A 1168-amino-acid polypeptide reads, in one-letter code: Transcription-repair-coupling factor (1168 aa).

A Helicase ATP-binding domain is found at 633–794; the sequence is DMQKSRPMDR…MLGVRDLSVI (162 aa). Residue 646 to 653 coordinates ATP; it reads GDVGYGKT. A DEEQ box motif is present at residues 747-750; the sequence is DEEQ. One can recognise a Helicase C-terminal domain in the interval 808–969; sequence VLEQNMSFIK…GFKIAMRDLN (162 aa).

This sequence in the N-terminal section; belongs to the UvrB family. It in the C-terminal section; belongs to the helicase family. RecG subfamily.

The protein resides in the cytoplasm. In terms of biological role, couples transcription and DNA repair by recognizing RNA polymerase (RNAP) stalled at DNA lesions. Mediates ATP-dependent release of RNAP and its truncated transcript from the DNA, and recruitment of nucleotide excision repair machinery to the damaged site. The protein is Transcription-repair-coupling factor of Staphylococcus aureus (strain USA300).